Consider the following 149-residue polypeptide: Large ribosomal subunit protein eL8 (149 aa).

This sequence belongs to the eukaryotic ribosomal protein eL8 family. As to quaternary structure, part of the 50S ribosomal subunit. Probably part of the RNase P complex.

It is found in the cytoplasm. Functionally, multifunctional RNA-binding protein that recognizes the K-turn motif in ribosomal RNA, the RNA component of RNase P, box H/ACA, box C/D and box C'/D' sRNAs. The polypeptide is Large ribosomal subunit protein eL8 (Pyrobaculum calidifontis (strain DSM 21063 / JCM 11548 / VA1)).